Consider the following 809-residue polypeptide: Interleukin-4 receptor subunit alpha (809 aa).

The signal sequence occupies residues 1–25; sequence MGCLCPGLTLPVSCLILVWAAGSGS. Over 26–231 the chain is Extracellular; it reads VKVLRLTACF…NYYEQPLEQR (206 aa). Cysteines 34 and 44 form a disulfide. Residues Asn53 and Asn71 are each glycosylated (N-linked (GlcNAc...) asparagine). Cys74 and Cys86 are disulfide-bonded. 3 N-linked (GlcNAc...) asparagine glycosylation sites follow: Asn112, Asn128, and Asn161. Positions 125–222 constitute a Fibronectin type-III domain; that stretch reads APQNLTVHAI…EWSPSTTWHN (98 aa). Ser163 carries the post-translational modification Phosphoserine. Residues Asn175 and Asn208 are each glycosylated (N-linked (GlcNAc...) asparagine). The short motif at 211–215 is the WSXWS motif element; it reads WSEWS. A helical transmembrane segment spans residues 232–255; sequence LPLGVSISCVVILAICLSCYFSII. Over 256-809 the chain is Cytoplasmic; sequence KIKKEWWDQI…STGPTCTSAS (554 aa). Positions 261 to 269 match the Box 1 motif motif; sequence WWDQIPNPA. 2 disordered regions span residues 369-397 and 441-468; these read ESEEEEVEEDRGSFCPSPESSGSGFQEGR and SAGPQEAASQGEEQPLNPESNPLATLTQ. Polar residues predominate over residues 447–468; the sequence is AASQGEEQPLNPESNPLATLTQ. Residue Tyr488 is modified to Phosphotyrosine. Positions 514-536 are disordered; sequence LGQVDPSIPSAPQPSEPPTALQP. Phosphotyrosine occurs at positions 566, 590, and 618. The segment at 606-674 is disordered; the sequence is QSGVEASSGE…EPTVKGEDPR (69 aa). An ITIM motif motif is present at residues 695–700; the sequence is IVYSAL.

Belongs to the type I cytokine receptor family. Type 4 subfamily. As to quaternary structure, the functional IL4 receptor is formed by initial binding of IL4 to IL4R. Subsequent recruitment to the complex of the common gamma chain, in immune cells, creates a type I receptor and, in non-immune cells, of IL13RA1 forms a type II receptor. IL4R can also interact with the IL13/IL13RA1 complex to form a similar type II receptor. Interacts with PIK3C3. Interacts with the SH2-containing phosphatases, PTPN6/SHIP1, PTPN11/SHIP2 and INPP5D/SHIP. Interacts with JAK1 through a Box 1-containing region; inhibited by SOCS5. Interacts with SOCS5; inhibits IL4 signaling. Interacts with JAK3. Interacts with CLM1. Interacts with IL13RA2. In terms of processing, on IL4 binding, phosphorylated on tyrosine residues in the cytoplasmic domain.

The protein localises to the cell membrane. It localises to the secreted. Receptor for both interleukin 4 and interleukin 13. Couples to the JAK1/2/3-STAT6 pathway. The IL4 response is involved in promoting Th2 differentiation. The IL4/IL13 responses are involved in regulating IgE production and, chemokine and mucus production at sites of allergic inflammation. In certain cell types, can signal through activation of insulin receptor substrates, IRS1/IRS2. The protein is Interleukin-4 receptor subunit alpha (IL4R) of Equus caballus (Horse).